Consider the following 571-residue polypeptide: Calcium-dependent protein kinase 16 (571 aa).

The disordered stretch occupies residues 1–74 (MGLCFSSAAK…TRHTPPHGKV (74 aa)). Gly-2 carries N-myristoyl glycine lipidation. The S-palmitoyl cysteine moiety is linked to residue Cys-4. Basic residues predominate over residues 63-72 (TPTRHTPPHG). The Protein kinase domain maps to 108–368 (YTIGKLLGHG…AAQALSHPWV (261 aa)). ATP-binding positions include 114 to 122 (LGHGQFGYT) and Lys-137. Asp-234 functions as the Proton acceptor in the catalytic mechanism. Residue Ser-274 is modified to Phosphoserine. An autoinhibitory domain region spans residues 374 to 404 (ASEIPIDISVLNNMRQFVKFSRLKQFALRAL). EF-hand domains are found at residues 411-446 (EELA…DHPW), 448-483 (LKDA…VNQL), 490-525 (KWQQ…KGSI), and 528-555 (LLEE…ASIK). Ca(2+) contacts are provided by Asp-424, Asp-426, Asn-428, Glu-435, Asp-461, Asn-463, Asp-465, Glu-472, Asp-503, Asp-505, Asp-507, Glu-514, Asp-533, Asp-535, Asp-537, and Lys-539. Ser-541 is subject to Phosphoserine. Glu-544 lines the Ca(2+) pocket.

It belongs to the protein kinase superfamily. Ser/Thr protein kinase family. CDPK subfamily.

It localises to the cell membrane. The protein resides in the nucleus. It carries out the reaction L-seryl-[protein] + ATP = O-phospho-L-seryl-[protein] + ADP + H(+). It catalyses the reaction L-threonyl-[protein] + ATP = O-phospho-L-threonyl-[protein] + ADP + H(+). Activated by calcium. Autophosphorylation may play an important role in the regulation of the kinase activity. Its function is as follows. May play a role in signal transduction pathways that involve calcium as a second messenger. In Arabidopsis thaliana (Mouse-ear cress), this protein is Calcium-dependent protein kinase 16 (CPK16).